A 79-amino-acid chain; its full sequence is MQVLVRDNNVDQALKALKKKMQREGIFREMKLRGHYEKPSEKRAREKAEAIRRARKLARKKMQREGLLPMKPKPVVGVR.

The segment at 59–79 is disordered; sequence RKKMQREGLLPMKPKPVVGVR.

This sequence belongs to the bacterial ribosomal protein bS21 family.

This is Small ribosomal subunit protein bS21 from Methylocella silvestris (strain DSM 15510 / CIP 108128 / LMG 27833 / NCIMB 13906 / BL2).